The primary structure comprises 299 residues: 4-hydroxy-tetrahydrodipicolinate synthase (299 aa).

T45 is a binding site for pyruvate. The Proton donor/acceptor role is filled by Y133. K161 (schiff-base intermediate with substrate) is an active-site residue. Position 203 (I203) interacts with pyruvate.

This sequence belongs to the DapA family. Homotetramer; dimer of dimers.

It localises to the cytoplasm. The catalysed reaction is L-aspartate 4-semialdehyde + pyruvate = (2S,4S)-4-hydroxy-2,3,4,5-tetrahydrodipicolinate + H2O + H(+). The protein operates within amino-acid biosynthesis; L-lysine biosynthesis via DAP pathway; (S)-tetrahydrodipicolinate from L-aspartate: step 3/4. Its function is as follows. Catalyzes the condensation of (S)-aspartate-beta-semialdehyde [(S)-ASA] and pyruvate to 4-hydroxy-tetrahydrodipicolinate (HTPA). The polypeptide is 4-hydroxy-tetrahydrodipicolinate synthase (Blochmanniella pennsylvanica (strain BPEN)).